The sequence spans 379 residues: Glutamate 5-kinase (379 aa).

ATP is bound at residue K19. Residues S59, D146, and N158 each contribute to the substrate site. Residues 178-179 (TD) and 220-226 (TGGMATK) each bind ATP. The PUA domain occupies 285–363 (SGDIIIDDGA…KDIISILGHD (79 aa)).

The protein belongs to the glutamate 5-kinase family.

The protein localises to the cytoplasm. The enzyme catalyses L-glutamate + ATP = L-glutamyl 5-phosphate + ADP. It participates in amino-acid biosynthesis; L-proline biosynthesis; L-glutamate 5-semialdehyde from L-glutamate: step 1/2. Its function is as follows. Catalyzes the transfer of a phosphate group to glutamate to form L-glutamate 5-phosphate. In Vibrio campbellii (strain ATCC BAA-1116), this protein is Glutamate 5-kinase.